Consider the following 397-residue polypeptide: MSSDGIKEIDSDLIETNYDNVVYKFDDLNLKPNIVRGIFGYGYETPSAIQQRAILPITEGRDVLAQAQSGTGKTATFTISALQRIDENEKSTQALILAPTRELALQIKNVITSIGLYLNVTVHASIGGTSMQDDIEAFRSGVQVVVGTPGRVFDMIERRYFKTEKVKMFIMDEADEMLSSGFKEQIYNIFRLLPETTQVVLLSATMPQDVLEVTTKFMNNPVRILVKKDELTLEGIKQFYINVELEDYKFDCLCDLYDSISVTQAVIFCNTRSKVEFLTTKLKAENFTVSAIHADLPQAERDTIMKEFRSGSSRILIATDLLARGIDVQQVSLVINYDLPSNKENYIHRIGRGGRFGRKGVAINFVTERDVGMMREIEQFYSTQIEEMPADIGALFN.

Residues 23–51 (YKFDDLNLKPNIVRGIFGYGYETPSAIQQ) carry the Q motif motif. The 171-residue stretch at 54 to 224 (ILPITEGRDV…TKFMNNPVRI (171 aa)) folds into the Helicase ATP-binding domain. 67–74 (AQSGTGKT) is a binding site for ATP. The DEAD box motif lies at 172–175 (DEAD). The Helicase C-terminal domain maps to 235–396 (GIKQFYINVE…EMPADIGALF (162 aa)).

The protein belongs to the DEAD box helicase family. eIF4A subfamily. In terms of assembly, component of the eIF4F complex, which composition varies with external and internal environmental conditions. It is composed of at least eIF4A, eIF4E and eIF4G.

It is found in the cytoplasm. It carries out the reaction ATP + H2O = ADP + phosphate + H(+). Functionally, ATP-dependent RNA helicase which is a subunit of the eIF4F complex involved in cap recognition and is required for mRNA binding to ribosome. In the current model of translation initiation, eIF4A unwinds RNA secondary structures in the 5'-UTR of mRNAs which is necessary to allow efficient binding of the small ribosomal subunit, and subsequent scanning for the initiator codon. The sequence is that of ATP-dependent RNA helicase eIF4A (TIF1) from Scheffersomyces stipitis (strain ATCC 58785 / CBS 6054 / NBRC 10063 / NRRL Y-11545) (Yeast).